Consider the following 496-residue polypeptide: Glutamyl-tRNA(Gln) amidotransferase subunit A (496 aa).

Residues Lys79 and Ser159 each act as charge relay system in the active site. The Acyl-ester intermediate role is filled by Ser183.

This sequence belongs to the amidase family. GatA subfamily. Heterotrimer of A, B and C subunits.

The enzyme catalyses L-glutamyl-tRNA(Gln) + L-glutamine + ATP + H2O = L-glutaminyl-tRNA(Gln) + L-glutamate + ADP + phosphate + H(+). In terms of biological role, allows the formation of correctly charged Gln-tRNA(Gln) through the transamidation of misacylated Glu-tRNA(Gln) in organisms which lack glutaminyl-tRNA synthetase. The reaction takes place in the presence of glutamine and ATP through an activated gamma-phospho-Glu-tRNA(Gln). The protein is Glutamyl-tRNA(Gln) amidotransferase subunit A of Ruegeria pomeroyi (strain ATCC 700808 / DSM 15171 / DSS-3) (Silicibacter pomeroyi).